Reading from the N-terminus, the 945-residue chain is Microtubule cross-linking factor 3 (945 aa).

Low complexity-rich tracts occupy residues 1–23, 72–93, and 110–126; these read MSQPPSGGAAPAATSASAAAAAT, QQQLQQQQQQGNKITGRSTSGT, and PKGAVPGAVQPAPGAEG. The signal sequence occupies residues 1–25; that stretch reads MSQPPSGGAAPAATSASAAAAATEA. 4 disordered regions span residues 1–250, 265–293, 307–366, and 494–522; these read MSQP…SYWK, KERAAAAAAAAQMHTKNGGGGSRSSPVAG, SPMA…TLKN, and LSLKRRGSKDLPKSEKKAQQTPTEDDNED. The segment covering 141 to 151 has biased composition (basic and acidic residues); it reads GQPEEAPREIE. The span at 164-179 shows a compositional bias: gly residues; sequence GGVGGGGEGGGAGGGP. A compositionally biased stretch (low complexity) spans 219 to 235; it reads TAATSKTPGPGSRNSGS. Positions 236–247 are enriched in gly residues; sequence GSTGSGSGGGGS. The segment covering 328–345 has biased composition (low complexity); that stretch reads AMQAAAPPSSQPHSQQLQ. The stretch at 340-724 forms a coiled coil; that stretch reads HSQQLQEQED…GKVMQLQYEN (385 aa). Basic and acidic residues-rich tracts occupy residues 353–366 and 494–511; these read EMEKLREENETLKN and LSLKRRGSKDLPKSEKKA. S567 carries the post-translational modification Phosphoserine. Positions 741 to 811 are disordered; the sequence is GIRGSPRDSD…PWPKSFSDRQ (71 aa). The segment covering 745–766 has biased composition (basic and acidic residues); the sequence is SPRDSDAESDAGKKESDDDSRP. Position 779 is a phosphoserine (S779). Residues 809–833 are a coiled coil; that stretch reads DRQQMKDIRSEAERLGKTIDRLIAD. The chain crosses the membrane as a helical span at residues 913-933; sequence PIILLILILVLFSSLSYTTIF.

This sequence belongs to the MTCL family.

It localises to the membrane. This Mus musculus (Mouse) protein is Microtubule cross-linking factor 3 (Mtcl3).